The following is a 464-amino-acid chain: Sensor histidine kinase Hik34 (464 aa).

Residues 235–449 (ALTHEVRTPL…ILTIYLKCEQ (215 aa)) form the Histidine kinase domain. Residue His-238 is modified to Phosphohistidine; by autocatalysis.

When expressed in E.coli autophosphorylates at 18 to 30 degrees Celsius; less phosphorylation occurs at 36 and none occurs at 42 or 48 degrees Celsius.

The enzyme catalyses ATP + protein L-histidine = ADP + protein N-phospho-L-histidine.. Member of a two-component system Hik34/Rre1, controlling expression of at least 20 genes in response to hyperosmotic stress (0.5 M sorbitol) or salt (0.5 M NaCl). Represses expression of heat shock genes under normal growth conditions. Required for survival of long-term heat shock exposure. This chain is Sensor histidine kinase Hik34, found in Synechocystis sp. (strain ATCC 27184 / PCC 6803 / Kazusa).